We begin with the raw amino-acid sequence, 292 residues long: Putative two-component response regulator-like APRR4 (292 aa).

The 116-residue stretch at 43–158 folds into the Response regulatory domain; the sequence is RVLVFDEDPS…DLRIVFKHLV (116 aa). The tract at residues 168–215 is disordered; the sequence is VTGEAEKAAGEKSSSVGDSTIRNPNKSKRSSCLEAEVNEEDRHDHNDR. A compositionally biased stretch (polar residues) spans 179 to 191; that stretch reads KSSSVGDSTIRNP. Residues 225–275 constitute a DNA-binding region (myb-like GARP); the sequence is RVVWDEELHQNFLNAVDFLGLERAVPKKILDVMKVDYISRENVASHLQVTF.

This sequence belongs to the ARR-like family. As to quaternary structure, binds the target DNA as a monomer.

Its subcellular location is the nucleus. Functionally, transcriptional activator that binds specifically to the DNA sequence 5'-[AG]GATT-3'. This is Putative two-component response regulator-like APRR4 (APRR4) from Arabidopsis thaliana (Mouse-ear cress).